We begin with the raw amino-acid sequence, 405 residues long: Arginine biosynthesis bifunctional protein ArgJ (405 aa).

Over residues 1 to 18 the composition is skewed to polar residues; it reads MTSADKNNPDTSTAQGSS. Positions 1–21 are disordered; that stretch reads MTSADKNNPDTSTAQGSSADL. Substrate is bound by residues T167, K189, T200, E281, N400, and T405. The Nucleophile role is filled by T200.

The protein belongs to the ArgJ family. In terms of assembly, heterotetramer of two alpha and two beta chains.

The protein resides in the cytoplasm. It catalyses the reaction N(2)-acetyl-L-ornithine + L-glutamate = N-acetyl-L-glutamate + L-ornithine. The enzyme catalyses L-glutamate + acetyl-CoA = N-acetyl-L-glutamate + CoA + H(+). The protein operates within amino-acid biosynthesis; L-arginine biosynthesis; L-ornithine and N-acetyl-L-glutamate from L-glutamate and N(2)-acetyl-L-ornithine (cyclic): step 1/1. It functions in the pathway amino-acid biosynthesis; L-arginine biosynthesis; N(2)-acetyl-L-ornithine from L-glutamate: step 1/4. In terms of biological role, catalyzes two activities which are involved in the cyclic version of arginine biosynthesis: the synthesis of N-acetylglutamate from glutamate and acetyl-CoA as the acetyl donor, and of ornithine by transacetylation between N(2)-acetylornithine and glutamate. The sequence is that of Arginine biosynthesis bifunctional protein ArgJ from Corynebacterium jeikeium (strain K411).